The primary structure comprises 393 residues: 5-amino-6-(D-ribitylamino)uracil--L-tyrosine 4-hydroxyphenyl transferase (393 aa).

The 248-residue stretch at valine 71–asparagine 318 folds into the Radical SAM core domain. Cysteine 85, cysteine 89, and cysteine 92 together coordinate [4Fe-4S] cluster.

This sequence belongs to the radical SAM superfamily. CofH family. Consists of two subunits, CofG and CofH. [4Fe-4S] cluster is required as a cofactor.

The enzyme catalyses 5-amino-6-(D-ribitylamino)uracil + L-tyrosine + S-adenosyl-L-methionine = 5-amino-5-(4-hydroxybenzyl)-6-(D-ribitylimino)-5,6-dihydrouracil + 2-iminoacetate + 5'-deoxyadenosine + L-methionine + H(+). Its pathway is cofactor biosynthesis; coenzyme F0 biosynthesis. Functionally, catalyzes the radical-mediated synthesis of 5-amino-5-(4-hydroxybenzyl)-6-(D-ribitylimino)-5,6-dihydrouracil from 5-amino-6-(D-ribitylamino)uracil and L-tyrosine. In Trichodesmium erythraeum (strain IMS101), this protein is 5-amino-6-(D-ribitylamino)uracil--L-tyrosine 4-hydroxyphenyl transferase.